Consider the following 578-residue polypeptide: Signal peptide peptidase-like 2B (578 aa).

Positions 1-19 are cleaved as a signal peptide; it reads MAAARLAAALLLLAAQVAC. At 20–168 the chain is on the lumenal side; that stretch reads EFGVLRVVSQ…APSEPVMDYN (149 aa). The region spanning 61–145 is the PA domain; it reads LRDLSTTQLC…LLSHRDLQDI (85 aa). Residues asparagine 91 and asparagine 123 are each glycosylated (N-linked (GlcNAc...) asparagine). A helical membrane pass occupies residues 169–189; that stretch reads MVIIFVMAVGTVAIGGYWAGS. Over 190–216 the chain is Cytoplasmic; sequence HDVKKYMKHKRDDGPEKQEDEAVDVTP. The helical transmembrane segment at 217 to 237 threads the bilayer; the sequence is VMICVFVVMCCFMLVLLYYFY. The Lumenal portion of the chain corresponds to 238–239; it reads DR. Residues 240–260 form a helical membrane-spanning segment; the sequence is LVYVIIGIFCLASSTGLYSCL. At 261 to 286 the chain is on the cytoplasmic side; the sequence is APFVRKLPFCTCRVPDNNLPYFHKRP. The chain crosses the membrane as a helical span at residues 287 to 307; that stretch reads QARMLLLALFCVTVSVVWGIF. Topologically, residues 308 to 312 are lumenal; the sequence is RNEDQ. A helical transmembrane segment spans residues 313–333; the sequence is WAWVLQDTLGIAFCLYMLKTI. Over 334–341 the chain is Cytoplasmic; that stretch reads RLPTFKAC. The helical transmembrane segment at 342-362 threads the bilayer; it reads TLLLLVLFIYDIFFVFITPFL. The active site involves aspartate 352. The Lumenal segment spans residues 363–405; the sequence is TKSGNSIMVEVATGPSNSSTHEKLPMVLKVPRLNTSPLSLCDR. Residues 406 to 426 traverse the membrane as a helical segment; the sequence is PFSLLGFGDILVPGLLVAYCH. Residue aspartate 414 is part of the active site. Topologically, residues 427–438 are cytoplasmic; the sequence is RFDIQVQSSRIY. The chain crosses the membrane as a helical span at residues 439–459; the sequence is FVACTIAYGLGLLVTFVALVL. The Lumenal segment spans residues 460-463; that stretch reads MQRG. A helical membrane pass occupies residues 464–484; sequence QPALLYLVPCTLLTSCTVALW. The short motif at 465–467 is the PAL element; sequence PAL. Residues 485 to 578 lie on the Cytoplasmic side of the membrane; sequence RRELGAFWTG…IPVVKPETSA (94 aa). A disordered region spans residues 502-578; that stretch reads PQTPWAATQG…IPVVKPETSA (77 aa). The span at 520–529 shows a compositional bias: low complexity; that stretch reads SSLSEQPPSE.

It belongs to the peptidase A22B family. In terms of assembly, monomer. Homodimer. Interacts with ITM2B and TNF. In terms of processing, glycosylated.

It is found in the cell membrane. The protein localises to the golgi apparatus membrane. Its subcellular location is the lysosome membrane. The protein resides in the endosome membrane. It localises to the membrane. Functionally, intramembrane-cleaving aspartic protease (I-CLiP) that cleaves type II membrane signal peptides in the hydrophobic plane of the membrane. Functions in ITM2B and TNF processing. Catalyzes the intramembrane cleavage of the anchored fragment of shed TNF-alpha (TNF), which promotes the release of the intracellular domain (ICD) for signaling to the nucleus. May play a role in the regulation of innate and adaptive immunity. The polypeptide is Signal peptide peptidase-like 2B (Mus musculus (Mouse)).